We begin with the raw amino-acid sequence, 454 residues long: CCA-adding enzyme (454 aa).

The ATP site is built by serine 59 and arginine 62. Residues serine 59 and arginine 62 each coordinate CTP. The Mg(2+) site is built by aspartate 71, aspartate 73, and aspartate 125. ATP-binding residues include histidine 148, lysine 167, and tyrosine 176. Residues histidine 148, lysine 167, and tyrosine 176 each coordinate CTP.

This sequence belongs to the tRNA nucleotidyltransferase/poly(A) polymerase family. Archaeal CCA-adding enzyme subfamily. In terms of assembly, homodimer. Mg(2+) serves as cofactor.

The enzyme catalyses a tRNA precursor + 2 CTP + ATP = a tRNA with a 3' CCA end + 3 diphosphate. It catalyses the reaction a tRNA with a 3' CCA end + 2 CTP + ATP = a tRNA with a 3' CCACCA end + 3 diphosphate. Functionally, catalyzes the addition and repair of the essential 3'-terminal CCA sequence in tRNAs without using a nucleic acid template. Adds these three nucleotides in the order of C, C, and A to the tRNA nucleotide-73, using CTP and ATP as substrates and producing inorganic pyrophosphate. tRNA 3'-terminal CCA addition is required both for tRNA processing and repair. Also involved in tRNA surveillance by mediating tandem CCA addition to generate a CCACCA at the 3' terminus of unstable tRNAs. While stable tRNAs receive only 3'-terminal CCA, unstable tRNAs are marked with CCACCA and rapidly degraded. This Methanosarcina acetivorans (strain ATCC 35395 / DSM 2834 / JCM 12185 / C2A) protein is CCA-adding enzyme.